A 663-amino-acid polypeptide reads, in one-letter code: Transmembrane 9 superfamily member 2 (663 aa).

The N-terminal stretch at 1 to 28 is a signal peptide; the sequence is MSSRPPASLPARGPRLLLLSLLLLGTVP. At 29-300 the chain is on the lumenal side; sequence GPRPGSAFYL…LESMPHTHIQ (272 aa). Residues 301–321 form a helical membrane-spanning segment; that stretch reads WFSIMNSLVIVLFLSGMVAMI. The Cytoplasmic portion of the chain corresponds to 322 to 374; the sequence is MLRTLHKDIARYNQMDSTEDAQEEFGWKLVHGDIFRPPRKGMLLSVFLGSGTQ. Residues 375-395 traverse the membrane as a helical segment; that stretch reads ILIMTFVTLFFACLGFLSPAN. Topologically, residues 396–398 are lumenal; it reads RGA. The chain crosses the membrane as a helical span at residues 399-419; the sequence is LMTCAVVLWVLLGTPAGYVAA. The Cytoplasmic segment spans residues 420–437; the sequence is RFYKSFGGEKWKTNVLLT. The helical transmembrane segment at 438 to 458 threads the bilayer; it reads SFLCPGIVFADFFIMNLILWG. Over 459–466 the chain is Lumenal; the sequence is EGSSAAIP. Residues 467-487 traverse the membrane as a helical segment; that stretch reads FGTLVAILALWFCISVPLTFI. Residues 488 to 522 are Cytoplasmic-facing; the sequence is GAYFGFKKNAIEHPVRTNQIPRQIPEQSFYTKPLP. The helical transmembrane segment at 523–543 threads the bilayer; it reads GIIMGGILPFGCIFIQLFFIL. The Lumenal portion of the chain corresponds to 544-554; sequence NSIWSHQMYYM. Residues 555 to 575 traverse the membrane as a helical segment; sequence FGFLFLVFIILVITCSEATIL. Topologically, residues 576–591 are cytoplasmic; the sequence is LCYFHLCAEDYHWQWR. A helical transmembrane segment spans residues 592 to 612; sequence SFLTSGFTAVYFLVYAIHYFF. The Lumenal portion of the chain corresponds to 613-631; it reads SKLQITGTASTILYFGYTM. The helical transmembrane segment at 632 to 652 threads the bilayer; it reads IMVLIFFLFTGTIGFFACFWF. Residues 653 to 663 are Cytoplasmic-facing; that stretch reads VTKIYSVVKVD.

It belongs to the nonaspanin (TM9SF) (TC 9.A.2) family.

The protein localises to the endosome membrane. Its subcellular location is the golgi outpost. The protein resides in the cytoplasm. It localises to the cytoskeleton. It is found in the microtubule organizing center. In the intracellular compartments, may function as a channel or small molecule transporter. This Rattus norvegicus (Rat) protein is Transmembrane 9 superfamily member 2 (Tm9sf2).